A 324-amino-acid chain; its full sequence is MIALGIEGTAHTLGIGIVTENKVLANVFDTLKTEKGGIHPKEAAEHHAKLLKPLLRKALEEAGVSMEDIDVIAFSQGPGLGPALRVVATAARALAIKYNKPIVGVNHCIAHVEITKMFGVKDPVGLYVSGGNTQVLALEGGRYRVFGETLDIGIGNALDVFARELGLGFPGGPKIEKLALKGEKYIELPYAVKGMDLSFSGLLTEAIRKYKSGKYRVEDLAYSFQETAFAALVEVTERALAHTEKEEVVLVGGVAANNRLREMLRIMAEDRGVKFFVPPYDLCRDNGAMIAYTGLRMYKAGIKFKLEETIVKQKFRTDEVEVVW.

3 residues coordinate Fe cation: His-107, His-111, and Tyr-127. Residues 127–131 (YVSGG), Asp-159, Gly-172, Glu-176, and Asn-257 contribute to the substrate site. Residue Asp-285 coordinates Fe cation.

Belongs to the KAE1 / TsaD family. Monomer. Component of the KEOPS complex that consists of Kae1, Bud32, Cgi121 and Pcc1; the whole complex dimerizes. Fe(2+) serves as cofactor.

It is found in the cytoplasm. It catalyses the reaction L-threonylcarbamoyladenylate + adenosine(37) in tRNA = N(6)-L-threonylcarbamoyladenosine(37) in tRNA + AMP + H(+). Functionally, required for the formation of a threonylcarbamoyl group on adenosine at position 37 (t(6)A37) in tRNAs that read codons beginning with adenine. Is a component of the KEOPS complex that is probably involved in the transfer of the threonylcarbamoyl moiety of threonylcarbamoyl-AMP (TC-AMP) to the N6 group of A37. Kae1 likely plays a direct catalytic role in this reaction, but requires other protein(s) of the complex to fulfill this activity. In Pyrococcus furiosus (strain ATCC 43587 / DSM 3638 / JCM 8422 / Vc1), this protein is tRNA N6-adenosine threonylcarbamoyltransferase.